The following is a 195-amino-acid chain: MVKIRLRRAGRKKLPVYQIVAADARAPRDGKFLEVVGHYQPTAKPHVVTLDRERVAYWMQTGAQPTSTVRSLIQKTGLLYELRLKKLGRSEAEVAEEMEKWQEKQAERRQKRLNVKSRRRQLKKEAAAKPAVAEEVAAPVAAAPVAEAPVAEVEVVIAPEVQVEAAVEAVPEAPVAAAEPAPEVKAEEKEEGGEA.

Positions 171-181 (PEAPVAAAEPA) are enriched in low complexity. Positions 171-195 (PEAPVAAAEPAPEVKAEEKEEGGEA) are disordered.

This sequence belongs to the bacterial ribosomal protein bS16 family.

The sequence is that of Small ribosomal subunit protein bS16 from Chlorobium luteolum (strain DSM 273 / BCRC 81028 / 2530) (Pelodictyon luteolum).